A 550-amino-acid chain; its full sequence is Glucose-6-phosphate isomerase (550 aa).

D-glucose 6-phosphate contacts are provided by residues 164-165 (GS), 215-220 (SKTFTT), glutamine 359, glutamate 363, and histidine 394. Glutamate 363 serves as the catalytic Proton donor. The active site involves histidine 394. Threonine 455 is modified (phosphothreonine). Lysine 516 provides a ligand contact to D-glucose 6-phosphate. Lysine 516 is a catalytic residue.

Belongs to the GPI family. Homodimer.

It is found in the cytoplasm. It localises to the cytosol. The enzyme catalyses alpha-D-glucose 6-phosphate = beta-D-fructose 6-phosphate. It functions in the pathway carbohydrate degradation; glycolysis; D-glyceraldehyde 3-phosphate and glycerone phosphate from D-glucose: step 2/4. In the cytoplasm, catalyzes the conversion of glucose-6-phosphate to fructose-6-phosphate, the second step in glycolysis, and the reverse reaction during gluconeogenesis. This chain is Glucose-6-phosphate isomerase (pgi1), found in Schizosaccharomyces pombe (strain 972 / ATCC 24843) (Fission yeast).